Consider the following 306-residue polypeptide: Aspartate carbamoyltransferase catalytic subunit (306 aa).

Residues Arg54 and Thr55 each contribute to the carbamoyl phosphate site. Lys83 contributes to the L-aspartate binding site. Carbamoyl phosphate-binding residues include Arg104, His132, and Gln135. L-aspartate contacts are provided by Arg165 and Arg227. 2 residues coordinate carbamoyl phosphate: Leu266 and Pro267.

It belongs to the aspartate/ornithine carbamoyltransferase superfamily. ATCase family. Heterododecamer (2C3:3R2) of six catalytic PyrB chains organized as two trimers (C3), and six regulatory PyrI chains organized as three dimers (R2).

The catalysed reaction is carbamoyl phosphate + L-aspartate = N-carbamoyl-L-aspartate + phosphate + H(+). The protein operates within pyrimidine metabolism; UMP biosynthesis via de novo pathway; (S)-dihydroorotate from bicarbonate: step 2/3. Its function is as follows. Catalyzes the condensation of carbamoyl phosphate and aspartate to form carbamoyl aspartate and inorganic phosphate, the committed step in the de novo pyrimidine nucleotide biosynthesis pathway. This Clostridium novyi (strain NT) protein is Aspartate carbamoyltransferase catalytic subunit.